The following is a 461-amino-acid chain: Putative ankyrin repeat protein FPV218 (461 aa).

12 ANK repeats span residues 1–28 (MLSLYYAINYKNRKMVERLLREGVHPDS), 31–61 (KGFYRPLVKSILLRDVDLVSILLQNGANPNN), 65–94 (ETVSPLAIAIKVNSPTIVSLLLDYNADTSL), 96–116 (PLYVSFPIIKVLVYHGIDVNV), 120–149 (ESRSFLHYAAKNDDVDTVISLILHGANVNV), 153–182 (KGLSPLHHAVSKKTTLTAKILLENGARVNI), 186–213 (LGRLPLHLGANTYEMVKLLIDYGSPIDI), 217–248 (NGSTPLHYAIWKSSLDTIRLLVNVSTINALDN), 250–277 (CNSPLHYIILSETEILVELLLRGADITI), 281–312 (CGNTPLDILCKLRIKKLDNIKAIISNAFLMRE), 358–385 (NGPTILDVCTDKVHFLHRLVNARDNVQY), and 431–460 (LPYELKHYIIEYINIEFIKSLLEHTNLKNK).

The chain is Putative ankyrin repeat protein FPV218 from Fowlpox virus (strain NVSL) (FPV).